A 386-amino-acid chain; its full sequence is Enoyl-[acyl-carrier-protein] reductase 1, mitochondrial (386 aa).

Residues 1 to 22 (MYSVLKQSIRPRLLATHNQFRT) constitute a mitochondrion transit peptide. Catalysis depends on Y79, which acts as the Proton donor. Residues N172, 199 to 202 (TSAV), 222 to 224 (RDR), 296 to 299 (YGGM), 321 to 323 (FWV), and K381 contribute to the NADP(+) site.

It belongs to the zinc-containing alcohol dehydrogenase family. Quinone oxidoreductase subfamily. Homodimer and heterodimer with ETR2.

The protein localises to the mitochondrion. The enzyme catalyses a 2,3-saturated acyl-[ACP] + NADP(+) = a (2E)-enoyl-[ACP] + NADPH + H(+). The catalysed reaction is (2E,4E)-hexadienoyl-CoA + NADPH + H(+) = (4E)-hexenoyl-CoA + NADP(+). It carries out the reaction (2E)-hexenoyl-CoA + NADPH + H(+) = hexanoyl-CoA + NADP(+). In terms of biological role, catalyzes the NADPH-dependent reduction of trans-2-enoyl thioesters in mitochondrial fatty acid synthesis (fatty acid synthesis type II). Fatty acid chain elongation in mitochondria uses acyl carrier protein (ACP) as an acyl group carrier, but the enzyme accepts both ACP and CoA thioesters as substrates in vitro. Required for respiration and the maintenance of the mitochondrial compartment. The protein is Enoyl-[acyl-carrier-protein] reductase 1, mitochondrial (ETR1) of Candida tropicalis (Yeast).